The sequence spans 329 residues: HTH-type transcriptional regulator ArgR (329 aa).

One can recognise an HTH araC/xylS-type domain in the interval 214 to 312 (TQAVLLMEAN…GVTPREDRNQ (99 aa)). 2 DNA-binding regions (H-T-H motif) span residues 231–252 (DEIA…KQYL) and 279–302 (IIQI…RNFF). A disordered region spans residues 307–329 (REDRNQRRGGSAFETTFTPVERG). A compositionally biased stretch (polar residues) spans 319–329 (FETTFTPVERG).

ArgR could be a transcriptional activator of the dauBAR operon in response to the presence of L-Arg. This is HTH-type transcriptional regulator ArgR (argR) from Pseudomonas aeruginosa (strain ATCC 15692 / DSM 22644 / CIP 104116 / JCM 14847 / LMG 12228 / 1C / PRS 101 / PAO1).